Here is a 230-residue protein sequence, read N- to C-terminus: Uracil-DNA glycosylase (230 aa).

The Proton acceptor role is filled by Asp-70.

This sequence belongs to the uracil-DNA glycosylase (UDG) superfamily. UNG family.

It localises to the cytoplasm. It catalyses the reaction Hydrolyzes single-stranded DNA or mismatched double-stranded DNA and polynucleotides, releasing free uracil.. In terms of biological role, excises uracil residues from the DNA which can arise as a result of misincorporation of dUMP residues by DNA polymerase or due to deamination of cytosine. The chain is Uracil-DNA glycosylase from Pseudomonas putida (strain GB-1).